The primary structure comprises 223 residues: MSQTKTAKVRVTLFFILVGGVLAMVAVVTDHWAVLSPHLEHHNETCEAAHFGLWRICTARVAVHNKDKSCEHVTPSGEKNCSYFRHFNPGESSEIFEFTTQKEYSISAAAIAIFSLGFIIVGSICAFLSFGNKRDYLLRPASMFYAFAGLCLIVSVEVMRQSVKRMIDSEDTVWIEHYYSWSFACACAAFILLFLGGLFLLLFSLPRMPQNPWESCMDAEPEH.

The Cytoplasmic portion of the chain corresponds to 1 to 10 (MSQTKTAKVR). Residues 11–29 (VTLFFILVGGVLAMVAVVT) form a helical membrane-spanning segment. Residues 30-109 (DHWAVLSPHL…TQKEYSISAA (80 aa)) lie on the Extracellular side of the membrane. N-linked (GlcNAc...) asparagine glycans are attached at residues asparagine 43 and asparagine 80. The cysteines at positions 57 and 81 are disulfide-linked. The helical transmembrane segment at 110-130 (AIAIFSLGFIIVGSICAFLSF) threads the bilayer. The Cytoplasmic segment spans residues 131–135 (GNKRD). A helical transmembrane segment spans residues 136-156 (YLLRPASMFYAFAGLCLIVSV). At 157–180 (EVMRQSVKRMIDSEDTVWIEHYYS) the chain is on the extracellular side. Residues 181–205 (WSFACACAAFILLFLGGLFLLLFSL) traverse the membrane as a helical segment. The Cytoplasmic segment spans residues 206-223 (PRMPQNPWESCMDAEPEH).

Belongs to the PMP-22/EMP/MP20 family. CACNG subfamily. Component of a calcium channel complex consisting of a pore-forming alpha subunit (CACNA1S) and the ancillary subunits CACNB1 or CACNB2, CACNG1 and CACNA2D1. The channel complex contains alpha, beta, gamma and delta subunits in a 1:1:1:1 ratio, i.e. it contains either CACNB1 or CACNB2. N-glycosylated. Detected in skeletal muscle (at protein level).

The protein localises to the cell membrane. It is found in the sarcolemma. Functionally, regulatory subunit of the voltage-gated calcium channel that gives rise to L-type calcium currents in skeletal muscle. Regulates channel inactivation kinetics. The protein is Voltage-dependent calcium channel gamma-1 subunit (Cacng1) of Mus musculus (Mouse).